A 165-amino-acid chain; its full sequence is Urease accessory protein UreE (165 aa).

The protein belongs to the UreE family.

Its subcellular location is the cytoplasm. Functionally, involved in urease metallocenter assembly. Binds nickel. Probably functions as a nickel donor during metallocenter assembly. The protein is Urease accessory protein UreE of Flavobacterium johnsoniae (strain ATCC 17061 / DSM 2064 / JCM 8514 / BCRC 14874 / CCUG 350202 / NBRC 14942 / NCIMB 11054 / UW101) (Cytophaga johnsonae).